Consider the following 333-residue polypeptide: Holliday junction branch migration complex subunit RuvB (333 aa).

The interval 1 to 182 is large ATPase domain (RuvB-L); the sequence is MDERLLSGES…FGVLSRLEYY (182 aa). Residues L21, R22, G63, K66, T67, T68, 129 to 131, R172, Y182, and R219 each bind ATP; that span reads EDF. T67 serves as a coordination point for Mg(2+). The small ATPAse domain (RuvB-S) stretch occupies residues 183-253; it reads TVDQLSAIVE…ITQMALELLQ (71 aa). The tract at residues 256 to 333 is head domain (RuvB-H); the sequence is KLGLDHIDHK…EHFGMEIPKV (78 aa). Positions 311 and 316 each coordinate DNA.

It belongs to the RuvB family. Homohexamer. Forms an RuvA(8)-RuvB(12)-Holliday junction (HJ) complex. HJ DNA is sandwiched between 2 RuvA tetramers; dsDNA enters through RuvA and exits via RuvB. An RuvB hexamer assembles on each DNA strand where it exits the tetramer. Each RuvB hexamer is contacted by two RuvA subunits (via domain III) on 2 adjacent RuvB subunits; this complex drives branch migration. In the full resolvosome a probable DNA-RuvA(4)-RuvB(12)-RuvC(2) complex forms which resolves the HJ.

It is found in the cytoplasm. It carries out the reaction ATP + H2O = ADP + phosphate + H(+). The RuvA-RuvB-RuvC complex processes Holliday junction (HJ) DNA during genetic recombination and DNA repair, while the RuvA-RuvB complex plays an important role in the rescue of blocked DNA replication forks via replication fork reversal (RFR). RuvA specifically binds to HJ cruciform DNA, conferring on it an open structure. The RuvB hexamer acts as an ATP-dependent pump, pulling dsDNA into and through the RuvAB complex. RuvB forms 2 homohexamers on either side of HJ DNA bound by 1 or 2 RuvA tetramers; 4 subunits per hexamer contact DNA at a time. Coordinated motions by a converter formed by DNA-disengaged RuvB subunits stimulates ATP hydrolysis and nucleotide exchange. Immobilization of the converter enables RuvB to convert the ATP-contained energy into a lever motion, pulling 2 nucleotides of DNA out of the RuvA tetramer per ATP hydrolyzed, thus driving DNA branch migration. The RuvB motors rotate together with the DNA substrate, which together with the progressing nucleotide cycle form the mechanistic basis for DNA recombination by continuous HJ branch migration. Branch migration allows RuvC to scan DNA until it finds its consensus sequence, where it cleaves and resolves cruciform DNA. This is Holliday junction branch migration complex subunit RuvB from Bacillus cereus (strain G9842).